The chain runs to 223 residues: N-terminal Xaa-Pro-Lys N-methyltransferase 1 (223 aa).

Residues Gly-69, Arg-74, 91–93, 119–120, and Gln-135 each bind S-adenosyl-L-methionine; these read DVT and LQ.

The protein belongs to the methyltransferase superfamily. NTM1 family.

The protein localises to the nucleus. It catalyses the reaction N-terminal L-alanyl-L-prolyl-L-lysyl-[protein] + 3 S-adenosyl-L-methionine = N-terminal N,N,N-trimethyl-L-alanyl-L-prolyl-L-lysyl-[protein] + 3 S-adenosyl-L-homocysteine + 3 H(+). The catalysed reaction is N-terminal L-seryl-L-prolyl-L-lysyl-[protein] + 3 S-adenosyl-L-methionine = N-terminal N,N,N-trimethyl-L-seryl-L-prolyl-L-lysyl-[protein] + 3 S-adenosyl-L-homocysteine + 3 H(+). The enzyme catalyses N-terminal L-prolyl-L-prolyl-L-lysyl-[protein] + 2 S-adenosyl-L-methionine = N-terminal N,N-dimethyl-L-prolyl-L-prolyl-L-lysyl-[protein] + 2 S-adenosyl-L-homocysteine + 2 H(+). Distributive alpha-N-methyltransferase that methylates the N-terminus of target proteins containing the N-terminal motif [Ala/Gly/Pro/Ser]-Pro-Lys when the initiator Met is cleaved. Specifically catalyzes mono-, di- or tri-methylation of the exposed alpha-amino group of the Ala, Gly or Ser residue in the [Ala/Gly/Ser]-Pro-Lys motif and mono- or di-methylation of Pro in the Pro-Pro-Lys motif. Required during mitosis for normal bipolar spindle formation and chromosome segregation via its action on target proteins. The sequence is that of N-terminal Xaa-Pro-Lys N-methyltransferase 1 (ntmt1) from Danio rerio (Zebrafish).